Consider the following 171-residue polypeptide: Adenine phosphoribosyltransferase (171 aa).

The protein belongs to the purine/pyrimidine phosphoribosyltransferase family. Homodimer.

It is found in the cytoplasm. It catalyses the reaction AMP + diphosphate = 5-phospho-alpha-D-ribose 1-diphosphate + adenine. Its pathway is purine metabolism; AMP biosynthesis via salvage pathway; AMP from adenine: step 1/1. Catalyzes a salvage reaction resulting in the formation of AMP, that is energically less costly than de novo synthesis. The protein is Adenine phosphoribosyltransferase of Gloeobacter violaceus (strain ATCC 29082 / PCC 7421).